A 192-amino-acid polypeptide reads, in one-letter code: Phosphoheptose isomerase (192 aa).

The SIS domain maps to 35 to 192; that stretch reads LIETLENQGK…CIERHFAHKN (158 aa). 50-52 is a binding site for substrate; sequence NGG. Positions 59 and 63 each coordinate Zn(2+). Substrate-binding positions include E63, 92 to 93, 118 to 120, S123, and Q170; these read ND and STS. Residues Q170 and H178 each coordinate Zn(2+).

Belongs to the SIS family. GmhA subfamily. Homotetramer. The cofactor is Zn(2+).

The protein resides in the cytoplasm. It carries out the reaction 2 D-sedoheptulose 7-phosphate = D-glycero-alpha-D-manno-heptose 7-phosphate + D-glycero-beta-D-manno-heptose 7-phosphate. The protein operates within carbohydrate biosynthesis; D-glycero-D-manno-heptose 7-phosphate biosynthesis; D-glycero-alpha-D-manno-heptose 7-phosphate and D-glycero-beta-D-manno-heptose 7-phosphate from sedoheptulose 7-phosphate: step 1/1. Functionally, catalyzes the isomerization of sedoheptulose 7-phosphate in D-glycero-D-manno-heptose 7-phosphate. This Helicobacter pylori (strain HPAG1) protein is Phosphoheptose isomerase.